Consider the following 206-residue polypeptide: MDLTITTLEGKDAGKVKLNEEIFGLDPRDDILQRVVRWQLARRQQGSHKAQGRGDVSRTGAKMYKQKGTGRARHHSARAPQFRGGGQAHGPVVRSHDHDLPKKVRALGLRHALSAKAKASDLIIIDDLAATEAKTKQLVSQFAKLGLENALVIGGAEIDVNFQRAASNIPNIDVLPVQGINVYDILRRGKLVLSKAAVEALEERFK.

The segment covering 66 to 77 (QKGTGRARHHSA) has biased composition (basic residues). Residues 66-96 (QKGTGRARHHSARAPQFRGGGQAHGPVVRSH) form a disordered region.

This sequence belongs to the universal ribosomal protein uL4 family. In terms of assembly, part of the 50S ribosomal subunit.

In terms of biological role, one of the primary rRNA binding proteins, this protein initially binds near the 5'-end of the 23S rRNA. It is important during the early stages of 50S assembly. It makes multiple contacts with different domains of the 23S rRNA in the assembled 50S subunit and ribosome. Forms part of the polypeptide exit tunnel. The chain is Large ribosomal subunit protein uL4 from Brucella anthropi (strain ATCC 49188 / DSM 6882 / CCUG 24695 / JCM 21032 / LMG 3331 / NBRC 15819 / NCTC 12168 / Alc 37) (Ochrobactrum anthropi).